The sequence spans 726 residues: Catalase-peroxidase (726 aa).

Residues 1-33 (MSTTDDTHNTLSTGKCPFHQGGHDRSAGAGTAS) are disordered. Residues 105-226 (WHGAGTYRSI…LGATEMGLIY (122 aa)) constitute a cross-link (tryptophyl-tyrosyl-methioninium (Trp-Tyr) (with M-252)). The active-site Proton acceptor is histidine 106. A cross-link (tryptophyl-tyrosyl-methioninium (Tyr-Met) (with W-105)) is located at residues 226 to 252 (YVNPEGPDHSGEPLSAAAAIRATFGNM). Heme b is bound at residue histidine 267.

It belongs to the peroxidase family. Peroxidase/catalase subfamily. As to quaternary structure, homodimer or homotetramer. The cofactor is heme b. Post-translationally, formation of the three residue Trp-Tyr-Met cross-link is important for the catalase, but not the peroxidase activity of the enzyme.

It catalyses the reaction H2O2 + AH2 = A + 2 H2O. The enzyme catalyses 2 H2O2 = O2 + 2 H2O. In terms of biological role, bifunctional enzyme with both catalase and broad-spectrum peroxidase activity. The sequence is that of Catalase-peroxidase from Salmonella typhi.